We begin with the raw amino-acid sequence, 82 residues long: Nuclear protein 1 (82 aa).

The segment at 1–82 (MATFPPATSA…SERKKRGARR (82 aa)) is disordered. Acidic residues predominate over residues 17–28 (PEDEDSSLDESD). Positions 65–82 (KLVTKLQNSERKKRGARR) match the Nuclear localization signal motif.

This sequence belongs to the NUPR family. In terms of assembly, monomer. Directly interacts with MSL1 and binds MORF4L1, two components of histone acetyltransferase complex; the interaction with MORF4L1 may be mediated by MSL1. Interacts with EP300; this interaction enhances the effect of EP300 on PAX2 transcription factor activity. Interacts with PAXIP1; this interaction prevents PAXIP1 inhibition of PAX2 transcription factor activity. Interacts with COPS5; this interaction allows COPS5-dependent CDKN1B nuclear to cytoplasm translocation. Interacts with RNF2. Interacts with FOXO3; this interaction represses FOXO3 transactivation. Interacts with PTMA; negatively regulates apoptotic process. Interacts with MYOD1, EP300 and DDX5; this interaction coordinates the association of anti-proliferative and pro-myogenic proteins at the myogenin promoter. Interacts with TP53; interaction is stress-dependent. Forms a complex with EP300 and TP53; this complex binds CDKN1A promoter leading to transcriptional induction of CDKN1A. Phosphorylated in vitro by PKA and CK. Phosphorylation promotes DNA-binding activity. Post-translationally, acetylated by EP300 in vitro. In terms of tissue distribution, widely expressed, with high levels in liver, pancreas, prostate, ovary, colon, thyroid, spinal cord, trachea and adrenal gland, moderate levels in heart, placenta, lung, skeletal muscle, kidney, testis, small intestine, stomach and lymph node, and low levels in brain, spleen, thymus and bone marrow. Not detected in peripheral blood leukocytes.

It localises to the nucleus. It is found in the cytoplasm. The protein localises to the perinuclear region. Transcription regulator that converts stress signals into a program of gene expression that empowers cells with resistance to the stress induced by a change in their microenvironment. Thereby participates in the regulation of many processes namely cell-cycle, apoptosis, autophagy and DNA repair responses. Controls cell cycle progression and protects cells from genotoxic stress induced by doxorubicin through the complex formation with TP53 and EP300 that binds CDKN1A promoter leading to transcriptional induction of CDKN1A. Protects pancreatic cancer cells from stress-induced cell death by binding the RELB promoter and activating its transcription, leading to IER3 transactivation. Negatively regulates apoptosis through interaction with PTMA. Inhibits autophagy-induced apoptosis in cardiac cells through FOXO3 interaction, inducing cytoplasmic translocation of FOXO3 thereby preventing the FOXO3 association with the pro-autophagic BNIP3 promoter. Inhibits cell growth and facilitates programmed cell death by apoptosis after adriamycin-induced DNA damage through transactivation of TP53. Regulates methamphetamine-induced apoptosis and autophagy through DDIT3-mediated endoplasmic reticulum stress pathway. Participates in DNA repair following gamma-irradiation by facilitating DNA access of the transcription machinery through interaction with MSL1 leading to inhibition of histone H4' Lys-16' acetylation (H4K16ac). Coactivator of PAX2 transcription factor activity, both by recruiting EP300 to increase PAX2 transcription factor activity and by binding PAXIP1 to suppress PAXIP1-induced inhibition on PAX2. Positively regulates cell cycle progression through interaction with COPS5 inducing cytoplasmic translocation of CDKN1B leading to the CDKN1B degradation. Coordinates, through its interaction with EP300, the assiociation of MYOD1, EP300 and DDX5 to the MYOG promoter, leading to inhibition of cell-cycle progression and myogenic differentiation promotion. Negatively regulates beta cell proliferation via inhibition of cell-cycle regulatory genes expression through the suppression of their promoter activities. Also required for LHB expression and ovarian maturation. Exacerbates CNS inflammation and demyelination upon cuprizone treatment. The polypeptide is Nuclear protein 1 (Homo sapiens (Human)).